We begin with the raw amino-acid sequence, 612 residues long: uncharacterized protein (612 aa).

The segment covering 176 to 196 (LVQRNNATTSPTTDSASENNE) has biased composition (polar residues). A disordered region spans residues 176–203 (LVQRNNATTSPTTDSASENNESVPSLTS).

This sequence to yeast YNL034w.

This is an uncharacterized protein from Saccharomyces cerevisiae (strain ATCC 204508 / S288c) (Baker's yeast).